The sequence spans 336 residues: N-acetyl-gamma-glutamyl-phosphate reductase (336 aa).

Cysteine 143 is an active-site residue.

Belongs to the NAGSA dehydrogenase family. Type 1 subfamily.

It localises to the cytoplasm. The catalysed reaction is N-acetyl-L-glutamate 5-semialdehyde + phosphate + NADP(+) = N-acetyl-L-glutamyl 5-phosphate + NADPH + H(+). Its pathway is amino-acid biosynthesis; L-arginine biosynthesis; N(2)-acetyl-L-ornithine from L-glutamate: step 3/4. In terms of biological role, catalyzes the NADPH-dependent reduction of N-acetyl-5-glutamyl phosphate to yield N-acetyl-L-glutamate 5-semialdehyde. This chain is N-acetyl-gamma-glutamyl-phosphate reductase, found in Dictyoglomus thermophilum (strain ATCC 35947 / DSM 3960 / H-6-12).